A 333-amino-acid chain; its full sequence is Olfactory receptor 9S13 (333 aa).

At 1–35 (MATAVHRNGSLTPVSLRVFVLVGFGGGALTQALLF) the chain is on the extracellular side. A glycan (N-linked (GlcNAc...) asparagine) is linked at Asn8. A helical membrane pass occupies residues 36–56 (AVFLVLYVVTVLGNLTMIVVI). At 57 to 72 (TLDARLHSPMYFFLKN) the chain is on the cytoplasmic side. The chain crosses the membrane as a helical span at residues 73-93 (LSFVDLCYSSAIAPNALANFL). The Extracellular portion of the chain corresponds to 94–106 (STSKVISFEACAT). A disulfide bond links Cys104 and Cys196. Residues 107-127 (QFFFFSLLATTETFLLAVMAY) form a helical membrane-spanning segment. The Cytoplasmic segment spans residues 128–150 (DRFMAICSPLRYPVTMCPTTCTR). Residues 151-171 (LVLGTFCVGCLNSIVQTSLTF) form a helical membrane-spanning segment. Residues 172 to 203 (QLPFCSSNRIDHFYCDVPPLLQLACASTALNE) are Extracellular-facing. Residues 204 to 224 (LFLFGLCGFIIVSTTLAVLVS) form a helical membrane-spanning segment. The Cytoplasmic portion of the chain corresponds to 225 to 251 (YGYITVTILRMHSGSGRHKVFSTCGSH). A helical transmembrane segment spans residues 252–272 (LTAVSLFYGTLFVMYAQPGAL). The Extracellular segment spans residues 273 to 278 (TSMEQG). The chain crosses the membrane as a helical span at residues 279 to 299 (KVVSIFYTLVIPMLNPLIYSL). The Cytoplasmic portion of the chain corresponds to 300–333 (RNKDVKDALQRLGQRHSLVKAVRGCPAAGGNASV).

It belongs to the G-protein coupled receptor 1 family.

Its subcellular location is the cell membrane. Functionally, odorant receptor. This chain is Olfactory receptor 9S13, found in Mus musculus (Mouse).